We begin with the raw amino-acid sequence, 439 residues long: Sequestosome-1 (439 aa).

Ala-2 bears the N-acetylalanine mark. Residues 2–48 (ASLTVKAYLLGKEEAAREIRRFSFCFSPEPEAEAAAGPGPCERLLSR) are interaction with LCK. One can recognise a PB1 domain in the interval 3–100 (SLTVKAYLLG…DIFRIYIKEK (98 aa)). Ser-24 carries the phosphoserine modification. The tract at residues 41–105 (PCERLLSRVA…YIKEKKECRR (65 aa)) is interaction with PRKCZ and dimerization. Residues 48–78 (RVAVLFPALRPGGFQAHYRDEDGDLVAFSSD) form an interaction with PAWR region. The interaction with GABRR3 stretch occupies residues 119–221 (VHPNVICDGC…DGRPCPTAES (103 aa)). A ZZ-type zinc finger spans residues 120 to 170 (HPNVICDGCNGPVVGTRYKCSVCPDYDLCSVCEGKGLHREHSKLIFPNPFG). Zn(2+) is bound by residues Cys-125, Cys-128, Cys-139, and Cys-142. Phosphotyrosine is present on Tyr-145. Residues Cys-148, Cys-151, His-157, and His-160 each coordinate Zn(2+). Positions 167–217 (NPFGHLSDSFSHSRWLRKLKHGHFGWPGWEMGPPGNWSPRPPRAGDGRPCP) are LIM protein-binding. A phosphoserine mark is found at Ser-173, Ser-175, and Ser-204. Positions 201–231 (GNWSPRPPRAGDGRPCPTAESASAPSEDPNV) are disordered. A TRAF6-binding motif is present at residues 225-230 (PSEDPN). Phosphoserine occurs at positions 246 and 263. The disordered stretch occupies residues 259 to 389 (GGKRSRLTPT…ALYPHLPPEA (131 aa)). Polar residues predominate over residues 265–292 (LTPTSAESSSTGTEDKSGTQPSSCSSEV). Thr-266 carries the phosphothreonine modification. An interaction with NTRK1 region spans residues 266–439 (TPTSAESSST…IQYSKHPPPL (174 aa)). 2 positions are modified to phosphoserine: Ser-269 and Ser-281. Residue Cys-288 is the site of S-palmitoyl cysteine attachment. Ser-305, Ser-327, and Ser-331 each carry phosphoserine. Residues 320 to 341 (QPEELMESDNCSGGDDDWTHLS) are MAP1LC3B-binding. Residues 335-340 (DDWTHL) carry the LIR motif. Positions 336–346 (DWTHLSSKEVD) are enriched in basic and acidic residues. The segment at 346–351 (DPSTGE) is interaction with KEAP1. 5 positions are modified to phosphoserine: Ser-348, Ser-354, Ser-360, Ser-364, and Ser-365. Polar residues predominate over residues 350-372 (GELQSLQMPESEGPSSLDPSQEG). In terms of domain architecture, UBA spans 388-433 (EADPRLIESLSQMLSMGFSDEGGWLTRLLQTKNYDIGAALDTIQYS). Ser-402 carries the post-translational modification Phosphoserine; by ULK1 and TBK1. Ser-406 is subject to Phosphoserine. 2 positions are modified to N6-acetyllysine; alternate: Lys-419 and Lys-434. Lys-419 is covalently cross-linked (Glycyl lysine isopeptide (Lys-Gly) (interchain with G-Cter in ubiquitin); alternate). A Glycyl lysine isopeptide (Lys-Gly) (interchain with G-Cter in SUMO2); alternate cross-link involves residue Lys-434.

Homooligomer or heterooligomer; may form homotypic arrays. Dimerization interferes with ubiquitin binding. Component of a ternary complex with PAWR and PRKCZ. Forms a complex with JUB/Ajuba, PRKCZ and TRAF6. Identified in a complex with TRAF6 and CYLD. Identified in a heterotrimeric complex with ubiquitin and ZFAND5, where ZFAND5 and SQSTM1 both interact with the same ubiquitin molecule. Interacts (via LIR motif) with MAP1LC3A and MAP1LC3B, as well as with other ATG8 family members, including GABARAP, GABARAPL1 and GABARAPL2; these interactions are necessary for the recruitment MAP1 LC3 family members to inclusion bodies containing polyubiquitinated protein aggregates and for their degradation by autophagy. Interacts directly with PRKCI and PRKCZ. Interacts with EBI3, LCK, RASA1, NR2F2, NTRK1, NTRK2, NTRK3, NBR1, MAP2K5 and MAPKAPK5. Upon TNF-alpha stimulation, interacts with RIPK1 probably bridging IKBKB to the TNF-R1 complex composed of TNF-R1/TNFRSF1A, TRADD and RIPK1. Interacts with the proteasome subunits PSMD4 and PSMC2. Interacts with TRAF6. Interacts with 'Lys-63'-linked polyubiquitinated MAPT/TAU. Interacts with FHOD3. Interacts with CYLD. Interacts with SESN1. Interacts with SESN2. Interacts with ULK1. Interacts with UBD. Interacts with WDR81; the interaction is direct and regulates the interaction of SQSTM1 with ubiquitinated proteins. Interacts with WDFY3; this interaction is required to recruit WDFY3 to cytoplasmic bodies and to PML bodies. Interacts with LRRC25. Interacts with STING1; leading to relocalization of STING1 to autophagosomes. Interacts (when phosphorylated at Ser-348) with KEAP1; the interaction is direct and inactivates the BCR(KEAP1) complex by sequestering KEAP1 in inclusion bodies, promoting its degradation. Interacts with MOAP1; promoting dissociation of SQSTM1 inclusion bodies that sequester KEAP1. Interacts with GBP1. Interacts with TAX1BP1. Interacts with (ubiquitinated) PEX5; specifically binds PEX5 ubiquitinated at 'Lys-209' in response to reactive oxygen species (ROS). Interacts (via PB1 domain) with TNS2; the interaction leads to sequestration of TNS2 in cytoplasmic aggregates with SQSTM1 and promotes TNS2 ubiquitination and proteasomal degradation. Interacts with IRS1; the interaction is disrupted by the presence of tensin TNS2. Interacts with TRIM5. Interacts with TRIM11 (when ubiquitinated); promoting AIM2 recruitment to autophagosomes and autophagy-dependent degradation of AIM2. Interacts with TRIM13. Interacts with TRIM16. Interacts with TRIM23. Interacts with TRIM50. Interacts with TRIM55. Interacts with ECSIT; this interaction inhibits TLR4 signaling via functional regulation of the TRAF6-ECSIT complex. Interacts with GABRR1, GABRR2 and GABRR3. Interacts with WDR83. Interacts with GRB2. Interacts with USP12; the interaction is independent of USP12 deubiquitinase activity and may be involved in regulation of autophagic flux. Interacts with ASB6. Phosphorylated. Phosphorylation at Ser-406 by ULK1 destabilizes the UBA dimer interface and increases binding affinity to ubiquitinated proteins. Phosphorylation at Ser-406 also primes for subsequent phosphorylation at Ser-402. Phosphorylation at Ser-402 by CK2 or ULK1 promotes binding to ubiquitinated proteins by increasing the affinity between the UBA domain and polyubiquitin chains. Phosphorylation at Ser-402 by ULK1 is stimulated by SESN2. Phosphorylated at Ser-402 by TBK1, leading to promote relocalization of 'Lys-63'-linked ubiquitinated STING1 to autophagosomes. Phosphorylation at Ser-348 by ULK1 promotes interaction with KEAP1 and inactivation of the BCR(KEAP1) complex, promoting NFE2L2/NRF2 nuclear accumulation and expression of phase II detoxifying enzymes. Phosphorylated in vitro by TTN. Post-translationally, ubiquitinated by UBE2J1 and RNF26 at Lys-434: ubiquitinated SQSTM1 attracts specific vesicle-associated adapters, forming a molecular bridge that restrains cognate vesicles in the perinuclear region and organizes the endosomal pathway for efficient cargo transport. Ubiquitination by UBE2D2 and UBE2D3 increases its ability to bind polyubiquitin chains by destabilizing the UBA dimer interface. Deubiquitination by USP15 releases target vesicles for fast transport into the cell periphery. Ubiquitinated by the BCR(KEAP1) complex at Lys-419, increasing SQSTM1 sequestering activity and promoting its degradation. Ubiquitinated via 'Lys-29' and 'Lys-33'-linked polyubiquitination leading to xenophagic targeting of bacteria and inhibition of their replication. In terms of processing, acetylated at Lys-419 and Lys-434 by KAT5/TIP60, promotes activity by destabilizing the UBA dimer interface and increases binding affinity to ubiquitinated proteins. Deacetylated by HDAC6. Palmitoylation at Cys-288 by ZDHHC19 is required for efficient autophagic degradation of SQSTM1-cargo complexes by promoting affinity for ATG8 proteins and recruitment of p62 bodies to autophagosomes. Dealmitoylated at Cys-288 by LYPLA1. In terms of tissue distribution, ubiquitously expressed. In brain, mainly expressed by neurons, especially pyramidal neurons in the cerebral cortex and hippocampus. Also expressed by Purkinje cells and neurons in the dentate nucleus of the cerebellum and neurons of the basal ganglia (at protein level).

The protein resides in the cytoplasmic vesicle. Its subcellular location is the autophagosome. The protein localises to the preautophagosomal structure. It is found in the cytoplasm. It localises to the cytosol. The protein resides in the nucleus. Its subcellular location is the PML body. The protein localises to the late endosome. It is found in the lysosome. It localises to the endoplasmic reticulum. The protein resides in the myofibril. Its subcellular location is the sarcomere. In terms of biological role, molecular adapter required for selective macroautophagy (aggrephagy) by acting as a bridge between polyubiquitinated proteins and autophagosomes. Promotes the recruitment of ubiquitinated cargo proteins to autophagosomes via multiple domains that bridge proteins and organelles in different steps. SQSTM1 first mediates the assembly and removal of ubiquitinated proteins by undergoing liquid-liquid phase separation upon binding to ubiquitinated proteins via its UBA domain, leading to the formation of insoluble cytoplasmic inclusions, known as p62 bodies. SQSTM1 then interacts with ATG8 family proteins on autophagosomes via its LIR motif, leading to p62 body recruitment to autophagosomes, followed by autophagic clearance of ubiquitinated proteins. SQSTM1 is itself degraded along with its ubiquitinated cargos. Also required to recruit ubiquitinated proteins to PML bodies in the nucleus. Also involved in autophagy of peroxisomes (pexophagy) in response to reactive oxygen species (ROS) by acting as a bridge between ubiquitinated PEX5 receptor and autophagosomes. Acts as an activator of the NFE2L2/NRF2 pathway via interaction with KEAP1: interaction inactivates the BCR(KEAP1) complex by sequestering the complex in inclusion bodies, promoting nuclear accumulation of NFE2L2/NRF2 and subsequent expression of cytoprotective genes. Promotes relocalization of 'Lys-63'-linked ubiquitinated STING1 to autophagosomes. Involved in endosome organization by retaining vesicles in the perinuclear cloud: following ubiquitination by RNF26, attracts specific vesicle-associated adapters, forming a molecular bridge that restrains cognate vesicles in the perinuclear region and organizes the endosomal pathway for efficient cargo transport. Sequesters tensin TNS2 into cytoplasmic puncta, promoting TNS2 ubiquitination and proteasomal degradation. May regulate the activation of NFKB1 by TNF-alpha, nerve growth factor (NGF) and interleukin-1. May play a role in titin/TTN downstream signaling in muscle cells. Adapter that mediates the interaction between TRAF6 and CYLD. More potent than isoform 2 to stimulate PRKCZ-dependent phosphorylation of KCNAB2. This is Sequestosome-1 (Sqstm1) from Rattus norvegicus (Rat).